Here is a 133-residue protein sequence, read N- to C-terminus: MKEKPAVEVRLDKWLWAARFYKTRALAREMIEGGKVHYNGQRSKPSKIVELNATLTLRQGNDERTVIVKAITEQRRPASEAALLYEETAESVEKREKMALARKLNALTMPHPDRRPDKKERRDLLRFKHGDSE.

The S4 RNA-binding domain occupies 9-71 (VRLDKWLWAA…DERTVIVKAI (63 aa)). The segment at 105–133 (NALTMPHPDRRPDKKERRDLLRFKHGDSE) is disordered. The segment covering 111-133 (HPDRRPDKKERRDLLRFKHGDSE) has biased composition (basic and acidic residues).

This sequence belongs to the HSP15 family. Monomer.

Its function is as follows. Involved in the recycling of free 50S ribosomal subunits that still carry a nascent chain. Binds RNA more specifically than DNA. Binds with very high affinity to the free 50S ribosomal subunit. Does not bind it when it is part of the 70S ribosome. This Escherichia coli O157:H7 protein is Heat shock protein 15 (hslR).